The chain runs to 314 residues: MMDTPIIRHPEKVRRPDNPSPRKPEWIRVRAPVSHEAAEVRQLMRSKNLFTVCEEAACPNIGECWKRRHATFMILGDICTRACAFCNVRTGKPGHVDDQEPVNLADSVVAMGLKHVVITSVDRDDLADGGAGHFHRCITEVRSRAPSCSIEVLTPDFRDKPQGALARVVEAGPDVFNHNLETVPRLYPTIRPGARYFHSLKLLDRVKTIDPGVFTKSGIMVGLGETREEVLQVMDDMRSAGVDFLTIGQYLQPTLKHVAVDRFVTPDEFKDYADIARGKGFLMVASSPLTRSSHHADRDFEDLRKARQDAAATK.

The tract at residues 1-24 (MMDTPIIRHPEKVRRPDNPSPRKP) is disordered. [4Fe-4S] cluster is bound by residues Cys53, Cys58, Cys64, Cys79, Cys83, Cys86, and Ser293. One can recognise a Radical SAM core domain in the interval 65-282 (WKRRHATFMI…ADIARGKGFL (218 aa)). The segment covering 294-308 (HHADRDFEDLRKARQ) has biased composition (basic and acidic residues). Positions 294–314 (HHADRDFEDLRKARQDAAATK) are disordered.

It belongs to the radical SAM superfamily. Lipoyl synthase family. It depends on [4Fe-4S] cluster as a cofactor.

The protein localises to the cytoplasm. It catalyses the reaction [[Fe-S] cluster scaffold protein carrying a second [4Fe-4S](2+) cluster] + N(6)-octanoyl-L-lysyl-[protein] + 2 oxidized [2Fe-2S]-[ferredoxin] + 2 S-adenosyl-L-methionine + 4 H(+) = [[Fe-S] cluster scaffold protein] + N(6)-[(R)-dihydrolipoyl]-L-lysyl-[protein] + 4 Fe(3+) + 2 hydrogen sulfide + 2 5'-deoxyadenosine + 2 L-methionine + 2 reduced [2Fe-2S]-[ferredoxin]. The protein operates within protein modification; protein lipoylation via endogenous pathway; protein N(6)-(lipoyl)lysine from octanoyl-[acyl-carrier-protein]: step 2/2. In terms of biological role, catalyzes the radical-mediated insertion of two sulfur atoms into the C-6 and C-8 positions of the octanoyl moiety bound to the lipoyl domains of lipoate-dependent enzymes, thereby converting the octanoylated domains into lipoylated derivatives. This Rhodospirillum rubrum (strain ATCC 11170 / ATH 1.1.1 / DSM 467 / LMG 4362 / NCIMB 8255 / S1) protein is Lipoyl synthase.